The primary structure comprises 200 residues: V-type proton ATPase subunit E (200 aa).

This sequence belongs to the V-ATPase E subunit family.

Its function is as follows. Produces ATP from ADP in the presence of a proton gradient across the membrane. The polypeptide is V-type proton ATPase subunit E (Thermoanaerobacter pseudethanolicus (strain ATCC 33223 / 39E) (Clostridium thermohydrosulfuricum)).